Consider the following 179-residue polypeptide: Protein GrpE (179 aa).

Residues 1–10 show a composition bias toward basic and acidic residues; the sequence is MSKKEEKQEE. Positions 1-23 are disordered; it reads MSKKEEKQEELQEEMEAVDAAGV.

It belongs to the GrpE family. Homodimer.

The protein localises to the cytoplasm. Its function is as follows. Participates actively in the response to hyperosmotic and heat shock by preventing the aggregation of stress-denatured proteins, in association with DnaK and GrpE. It is the nucleotide exchange factor for DnaK and may function as a thermosensor. Unfolded proteins bind initially to DnaJ; upon interaction with the DnaJ-bound protein, DnaK hydrolyzes its bound ATP, resulting in the formation of a stable complex. GrpE releases ADP from DnaK; ATP binding to DnaK triggers the release of the substrate protein, thus completing the reaction cycle. Several rounds of ATP-dependent interactions between DnaJ, DnaK and GrpE are required for fully efficient folding. The sequence is that of Protein GrpE from Enterococcus faecalis (strain ATCC 700802 / V583).